The primary structure comprises 467 residues: UDP-N-acetylmuramate--L-alanine ligase (467 aa).

Position 123–129 (123–129 (GTHGKST)) interacts with ATP.

The protein belongs to the MurCDEF family.

The protein localises to the cytoplasm. The enzyme catalyses UDP-N-acetyl-alpha-D-muramate + L-alanine + ATP = UDP-N-acetyl-alpha-D-muramoyl-L-alanine + ADP + phosphate + H(+). It functions in the pathway cell wall biogenesis; peptidoglycan biosynthesis. Cell wall formation. The sequence is that of UDP-N-acetylmuramate--L-alanine ligase from Arthrobacter sp. (strain FB24).